A 402-amino-acid chain; its full sequence is Arginine deiminase (402 aa).

C391 (amidino-cysteine intermediate) is an active-site residue.

Belongs to the arginine deiminase family.

The protein resides in the cytoplasm. The enzyme catalyses L-arginine + H2O = L-citrulline + NH4(+). The protein operates within amino-acid degradation; L-arginine degradation via ADI pathway; carbamoyl phosphate from L-arginine: step 1/2. The polypeptide is Arginine deiminase (Mycobacterium marinum (strain ATCC BAA-535 / M)).